Reading from the N-terminus, the 111-residue chain is uncharacterized protein (111 aa).

A helical transmembrane segment spans residues 27-47; sequence HLFHFPSISFFFFFFFFFFSF.

The protein localises to the membrane. This is an uncharacterized protein from Saccharomyces cerevisiae (strain ATCC 204508 / S288c) (Baker's yeast).